Here is a 127-residue protein sequence, read N- to C-terminus: Large ribosomal subunit protein bL19 (127 aa).

It belongs to the bacterial ribosomal protein bL19 family.

In terms of biological role, this protein is located at the 30S-50S ribosomal subunit interface and may play a role in the structure and function of the aminoacyl-tRNA binding site. The chain is Large ribosomal subunit protein bL19 from Acidovorax ebreus (strain TPSY) (Diaphorobacter sp. (strain TPSY)).